The primary structure comprises 200 residues: Probable DNA-directed RNA polymerase subunit delta (200 aa).

The 70-residue stretch at 19-88 (LSMIEVARAI…GDNKWGLRSW (70 aa)) folds into the HTH HARE-type domain. Acidic residues-rich tracts occupy residues 125-143 (DSDAIDYNADDPEDEDAYE) and 150-200 (YDDE…TSEE). Residues 125 to 200 (DSDAIDYNAD…SDDDAETSEE (76 aa)) are disordered.

Belongs to the RpoE family. In terms of assembly, RNAP is composed of a core of 2 alpha, a beta and a beta' subunits. The core is associated with a delta subunit and one of several sigma factors.

Participates in both the initiation and recycling phases of transcription. In the presence of the delta subunit, RNAP displays an increased specificity of transcription, a decreased affinity for nucleic acids, and an increased efficiency of RNA synthesis because of enhanced recycling. The protein is Probable DNA-directed RNA polymerase subunit delta of Streptococcus pneumoniae serotype 4 (strain ATCC BAA-334 / TIGR4).